Here is a 248-residue protein sequence, read N- to C-terminus: Putative transposase YncI (248 aa).

The protein belongs to the transposase 11 family.

The polypeptide is Putative transposase YncI (yncI) (Escherichia coli (strain K12)).